A 116-amino-acid chain; its full sequence is Large ribosomal subunit protein bL19 (116 aa).

The protein belongs to the bacterial ribosomal protein bL19 family.

Its function is as follows. This protein is located at the 30S-50S ribosomal subunit interface and may play a role in the structure and function of the aminoacyl-tRNA binding site. The protein is Large ribosomal subunit protein bL19 of Pseudomonas aeruginosa (strain LESB58).